The chain runs to 190 residues: Vacuolar protein sorting-associated protein 29 (190 aa).

The protein belongs to the VPS29 family. As to quaternary structure, component of the retromer complex which consists of VPS29 (MAG1), VPS26 (VPS26A or VPS26B), VPS35 (VPS35A or VPS35B or VPS35C), VPS5/17 (SNX1 or SNX2A or SNX2B). Component of a retromer subcomplex consisting of VPS29 (MAG1), VPS26 (VPS26A or VPS26B), VPS35 (VPS35A or VPS35B or VPS35C).

The protein localises to the cytoplasm. The protein resides in the endosome membrane. It localises to the prevacuolar compartment membrane. Its subcellular location is the golgi apparatus. It is found in the trans-Golgi network membrane. The protein localises to the late endosome membrane. In terms of biological role, plays a role in vesicular protein sorting. Component of the membrane-associated retromer complex which is essential in endosome-to-Golgi retrograde transport. Required for the auxin-carrier protein PIN2 sorting to the lytic vacuolar pathway and the PIN1 recycling to the plasma membrane, thus influencing auxin transport orientation. Also involved in the efficient sorting of seed storage proteins globulin 12S and albumin 2S. The VPS29-VPS26-VPS35 subcomplex may be involved in recycling of specific cargos from endosome to the plasma membrane. This chain is Vacuolar protein sorting-associated protein 29, found in Arabidopsis thaliana (Mouse-ear cress).